The chain runs to 435 residues: Amino acid transporter AVT6C (435 aa).

The disordered stretch occupies residues 1–24; that stretch reads MTPQIKTHLLPKQEPSSSENHGSS. A run of 11 helical transmembrane segments spans residues 28–48, 53–73, 100–120, 148–168, 181–201, 219–239, 260–280, 307–327, 354–374, 375–395, and 408–428; these read IVFNVSTSIIGAGIMSMPAAF, IVPAFLIITIIAWLSTISVGF, IAVQIATMVATFGCMIIFSII, WNTRIFALLFVYGFVLLPLVL, VSFLLAVLFVVISSVLAISAL, GSFWQLFTASPVIVTAFTFHF, ISVILCAAIYFATGLFGYLLF, IVRLSYVLHLMLVFPLLNFSL, LALLICCFLSAIAVPDIWYFF, QFMGSTITVSIAFIFPAAIVL, and IVAAIMLVLAVATSIIAISTN.

It belongs to the amino acid/polyamine transporter 2 family. Amino acid/auxin permease (AAAP) (TC 2.A.18.6) subfamily.

The protein resides in the membrane. The polypeptide is Amino acid transporter AVT6C (Arabidopsis thaliana (Mouse-ear cress)).